The primary structure comprises 295 residues: Cyclic dipyrimidine nucleotide synthase CdnE (295 aa).

Positions 1–28 are disordered; sequence MAKYTEDQLTSWTKPPSDSEQTKLENSE. Positions 7-19 are enriched in polar residues; it reads DQLTSWTKPPSDS. UTP-binding residues include glutamine 51 and serine 53. Aspartate 67 is a Mg(2+) binding site. Positions 123, 169, 197, 217, and 276 each coordinate UTP. A Pyrimidine specificity motif (R/Q)xW in donor pocket motif is present at residues 275-277; sequence RKW.

It belongs to the CD-NTase family. E02 subfamily. As to quaternary structure, monomer. Mg(2+) serves as cofactor.

The enzyme catalyses 2 UTP = c-di-UMP + 2 diphosphate. It carries out the reaction UTP + CTP = cyclic CMP-UMP + 2 diphosphate. In terms of biological role, cyclic nucleotide synthase (second messenger synthase) of a CBASS antivirus system. CBASS (cyclic oligonucleotide-based antiphage signaling system) provides immunity against bacteriophage. The CD-NTase protein synthesizes cyclic nucleotides in response to infection; these serve as specific second messenger signals. The signals activate a diverse range of effectors, leading to bacterial cell death and thus abortive phage infection. A type I-B(UU) CBASS system. The protein is Cyclic dipyrimidine nucleotide synthase CdnE of Cecembia lonarensis (strain CCUG 58316 / KCTC 22772 / LW9).